We begin with the raw amino-acid sequence, 363 residues long: Des-methyl DIF-1 methyltransferase A (363 aa).

Glycine 195, aspartate 221, aspartate 250, leucine 251, and lysine 266 together coordinate S-adenosyl-L-methionine. Histidine 270 (proton acceptor) is an active-site residue.

This sequence belongs to the class I-like SAM-binding methyltransferase superfamily. Cation-independent O-methyltransferase family. COMT subfamily.

It catalyses the reaction (3,5-dichloro-2,4,6-trihydroxyphenyl)hexan-1-one + S-adenosyl-L-methionine = 1-(3,5-dichloro-2,6-dihydroxy-4-methoxyphenyl)hexan-1-one + S-adenosyl-L-homocysteine + H(+). In terms of biological role, O-methyltransferase; part of the gene cluster that mediates the biosynthesis of DIF-1 (Differentiation Inducing Factor-1), a signal molecule involved in the differentiation of pstO (prestalk-O) cells. The three-step process begins with the formation of (2,4,6-trihydroxyphenyl)-1-hexan-1-one (THPH) by the polyketide synthase StlB. THPH is then dichlorinated by the flavin-dependent halogenase ChlA. The last step of DIF-1 biosynthesis is the O-methylation of dichloro-THPH (or des-methyl-DIF-1) by the methyltransferase DmtA to yield DIF-1. The sequence is that of Des-methyl DIF-1 methyltransferase A from Dictyostelium discoideum (Social amoeba).